Here is a 249-residue protein sequence, read N- to C-terminus: Protein YIP5 (249 aa).

The next 5 membrane-spanning stretches (helical) occupy residues 87–107 (LYGP…SNSI), 131–151 (ASII…ILVW), 164–184 (LYGY…PFGL), 188–208 (LASH…SIVF), and 228–248 (LLFG…LIFF).

The protein belongs to the YIP1 family. In terms of assembly, interacts with the YIP1 family members yip1 and yip4, and several Rab GTPases. The C-terminal cysteines in the Rab GTPase ypt2 are essential for the interaction. Interacts with snx3.

It is found in the membrane. Possible role in vesicle-mediated transport. May be involved in proper membrane localization of Rab GTPases. This chain is Protein YIP5, found in Schizosaccharomyces pombe (strain 972 / ATCC 24843) (Fission yeast).